A 217-amino-acid chain; its full sequence is Homologous-pairing protein 2 homolog (217 aa).

The tract at residues 89 to 117 (LDASIMALTAKVQGLQQSCRHMEAELKEL) is interaction with NR3C1, homodimerization and transcriptional activation almost abolished when missing. Residues 93-153 (IMALTAKVQG…LKNIKAATNH (61 aa)) adopt a coiled-coil conformation. The segment at 118 to 182 (TSALTTPEMQ…WRKRKRMTTE (65 aa)) is DNA-binding. An interaction with NR3C1 decreased when missing region spans residues 118–182 (TSALTTPEMQ…WRKRKRMTTE (65 aa)).

This sequence belongs to the HOP2 family. As to quaternary structure, forms a stable heterodimer with MND1. Interacts with PSMC3/TBP1. Interacts with the DNA-binding domain of the nuclear receptors NR3C1/GR, ESR2/ER-beta, THRB and RXRA. In terms of processing, phosphorylated by PKA, PKC and MAPK.

Its subcellular location is the nucleus. In terms of biological role, plays an important role in meiotic recombination. Stimulates DMC1-mediated strand exchange required for pairing homologous chromosomes during meiosis. The complex PSMC3IP/MND1 binds DNA, stimulates the recombinase activity of DMC1 as well as DMC1 D-loop formation from double-strand DNA. This complex stabilizes presynaptic RAD51 and DMC1 filaments formed on single strand DNA to capture double-strand DNA. This complex stimulates both synaptic and presynaptic critical steps in RAD51 and DMC1-promoted homologous pairing. May inhibit HIV-1 viral protein TAT activity and modulate the activity of proteasomes through association with PSMC3. Plays a role as a coactivator in nuclear receptor-mediated transcription. In Rattus norvegicus (Rat), this protein is Homologous-pairing protein 2 homolog (Psmc3ip).